Here is an 836-residue protein sequence, read N- to C-terminus: Translation initiation factor IF-2 (836 aa).

Residues Met-1–Gln-233 are disordered. Residues Ser-18 to His-27 show a composition bias toward polar residues. Positions Ser-50–Ser-60 are enriched in low complexity. Residues Lys-88–Arg-156 are compositionally biased toward basic and acidic residues. The segment covering Pro-167–Pro-176 has biased composition (low complexity). Basic and acidic residues predominate over residues Ser-185 to Arg-206. A tr-type G domain is found at Pro-333–Asp-501. Residues Gly-342 to Thr-349 form a G1 region. GTP is bound at residue Gly-342–Thr-349. The interval Gly-367 to His-371 is G2. Positions Asp-389–Gly-392 are G3. GTP contacts are provided by residues Asp-389–His-393 and Asn-443–Asp-446. Residues Asn-443–Asp-446 are G4. Positions Ser-479 to Lys-481 are G5.

This sequence belongs to the TRAFAC class translation factor GTPase superfamily. Classic translation factor GTPase family. IF-2 subfamily.

Its subcellular location is the cytoplasm. In terms of biological role, one of the essential components for the initiation of protein synthesis. Protects formylmethionyl-tRNA from spontaneous hydrolysis and promotes its binding to the 30S ribosomal subunits. Also involved in the hydrolysis of GTP during the formation of the 70S ribosomal complex. This is Translation initiation factor IF-2 from Cereibacter sphaeroides (strain ATCC 17023 / DSM 158 / JCM 6121 / CCUG 31486 / LMG 2827 / NBRC 12203 / NCIMB 8253 / ATH 2.4.1.) (Rhodobacter sphaeroides).